The following is a 466-amino-acid chain: Signal recognition particle 54 kDa protein (466 aa).

GTP-binding positions include 104-111 (GLQGSGKT), 184-188 (DTAGR), and 242-245 (TKLD). Positions 446–466 (QQQGGGGMGGLGGGGGLGPFG) are disordered. Over residues 448–466 (QGGGGMGGLGGGGGLGPFG) the composition is skewed to gly residues.

Belongs to the GTP-binding SRP family. SRP54 subfamily. In terms of assembly, part of the signal recognition particle protein translocation system, which is composed of SRP and FtsY. Archaeal SRP consists of a 7S RNA molecule of 300 nucleotides and two protein subunits: SRP54 and SRP19.

Its subcellular location is the cytoplasm. The enzyme catalyses GTP + H2O = GDP + phosphate + H(+). Functionally, involved in targeting and insertion of nascent membrane proteins into the cytoplasmic membrane. Binds to the hydrophobic signal sequence of the ribosome-nascent chain (RNC) as it emerges from the ribosomes. The SRP-RNC complex is then targeted to the cytoplasmic membrane where it interacts with the SRP receptor FtsY. This is Signal recognition particle 54 kDa protein from Haloquadratum walsbyi (strain DSM 16790 / HBSQ001).